A 149-amino-acid chain; its full sequence is NADH-quinone oxidoreductase subunit A (149 aa).

A run of 3 helical transmembrane segments spans residues 16–36 (FGIFLIVAIGLCCLMLVGAWF), 68–88 (FYLVAMFFVIFDVEALYLFAW), and 98–118 (LGFIEAAIFILVLLAGLVYLV).

It belongs to the complex I subunit 3 family. NDH-1 is composed of 13 different subunits. Subunits NuoA, H, J, K, L, M, N constitute the membrane sector of the complex.

It localises to the cell inner membrane. It catalyses the reaction a quinone + NADH + 5 H(+)(in) = a quinol + NAD(+) + 4 H(+)(out). Its function is as follows. NDH-1 shuttles electrons from NADH, via FMN and iron-sulfur (Fe-S) centers, to quinones in the respiratory chain. The immediate electron acceptor for the enzyme in this species is believed to be ubiquinone. Couples the redox reaction to proton translocation (for every two electrons transferred, four hydrogen ions are translocated across the cytoplasmic membrane), and thus conserves the redox energy in a proton gradient. The chain is NADH-quinone oxidoreductase subunit A from Cronobacter sakazakii (strain ATCC BAA-894) (Enterobacter sakazakii).